Consider the following 248-residue polypeptide: Molybdate/tungstate transport system permease protein WtpB (248 aa).

The Cytoplasmic portion of the chain corresponds to 1-9 (MGGRDYTLY). A helical transmembrane segment spans residues 10-30 (LFAALGSFLIVYIALPIIVIF). Topologically, residues 31 to 56 (TKQALDFRMLVKTIHDPLVIEALRNS) are extracellular. The 187-residue stretch at 53–239 (LRNSLLTATA…GISLGIFVVL (187 aa)) folds into the ABC transmembrane type-1 domain. Residues 57–77 (LLTATATALISLLFGVPLGYV) form a helical membrane-spanning segment. Topologically, residues 78-91 (LARKDFRGKSLVQA) are cytoplasmic. A helical membrane pass occupies residues 92-112 (IIDVPIVIPHSVVGIMLLVTF). The Extracellular portion of the chain corresponds to 113 to 115 (SNA). Residues 116–136 (ILDSYKGIIAAMLFVSAPFAI) traverse the membrane as a helical segment. The Cytoplasmic segment spans residues 137–164 (NSARDGFLAVDEKLEHVARTLGASKLRT). The helical transmembrane segment at 165-185 (FFSISLPIALPSIASGAIMAW) threads the bilayer. Residues 186 to 223 (ARGISEVGAILIVAYYPKTAQVLVMEYFNNYGLRASRP) are Extracellular-facing. A helical transmembrane segment spans residues 224 to 244 (ISVILMGISLGIFVVLRWLIG). The Cytoplasmic segment spans residues 245 to 248 (KAKS).

It belongs to the binding-protein-dependent transport system permease family. As to quaternary structure, the complex is composed of two ATP-binding proteins (WtpC), two transmembrane proteins (WtpB) and a solute-binding protein (WtpA).

The protein localises to the cell membrane. Part of the ABC transporter complex WtpABC involved in molybdate/tungstate import. Probably responsible for the translocation of the substrate across the membrane. In Pyrococcus abyssi (strain GE5 / Orsay), this protein is Molybdate/tungstate transport system permease protein WtpB (wtpB).